A 779-amino-acid chain; its full sequence is Vezatin (779 aa).

Transmembrane regions (helical) follow at residues 139 to 159 and 162 to 182; these read LATP…LLVM and TWWI…YLVI. Positions 430-462 form a coiled coil; sequence VRSLQLHLKALLNEVIILEDELEKLVCTKETQE. Disordered regions lie at residues 618–719 and 757–779; these read PVDP…DSLQ and EQTF…IEEK. The segment covering 625–634 has biased composition (polar residues); it reads ISNSEPSMNS. The segment covering 638–649 has biased composition (basic and acidic residues); the sequence is KVSKNDTEEESN. The segment covering 706–719 has biased composition (polar residues); it reads GLTTAPPTPRDSLQ. Residues 770 to 779 show a composition bias toward basic and acidic residues; it reads EENKNEIEEK.

This sequence belongs to the vezatin family. Interacts with USH2A (via the cytoplasmic region); the interaction associates VEZT with the USH2 complex at the stereocilia base. Interacts with myosin MYO7A and the cadherin-catenins complex.

The protein localises to the cell membrane. The protein resides in the cell projection. Its subcellular location is the stereocilium membrane. It localises to the cell junction. It is found in the adherens junction. The protein localises to the nucleus. The protein resides in the cytoplasmic vesicle. Its subcellular location is the secretory vesicle. It localises to the acrosome. Plays a pivotal role in the establishment of adherens junctions and their maintenance in adult life. Required for morphogenesis of the preimplantation embryo, and for the implantation process. Its function is as follows. (Microbial infection) In case of Listeria infection, promotes bacterial internalization by participating in myosin VIIa recruitment to the entry site. This Homo sapiens (Human) protein is Vezatin (VEZT).